Consider the following 402-residue polypeptide: NADH-quinone oxidoreductase subunit D (402 aa).

It belongs to the complex I 49 kDa subunit family. As to quaternary structure, NDH-1 is composed of 14 different subunits. Subunits NuoB, C, D, E, F, and G constitute the peripheral sector of the complex.

The protein localises to the cell inner membrane. The catalysed reaction is a quinone + NADH + 5 H(+)(in) = a quinol + NAD(+) + 4 H(+)(out). NDH-1 shuttles electrons from NADH, via FMN and iron-sulfur (Fe-S) centers, to quinones in the respiratory chain. The immediate electron acceptor for the enzyme in this species is believed to be ubiquinone. Couples the redox reaction to proton translocation (for every two electrons transferred, four hydrogen ions are translocated across the cytoplasmic membrane), and thus conserves the redox energy in a proton gradient. This Nitrobacter winogradskyi (strain ATCC 25391 / DSM 10237 / CIP 104748 / NCIMB 11846 / Nb-255) protein is NADH-quinone oxidoreductase subunit D.